We begin with the raw amino-acid sequence, 94 residues long: Protein EGG APPARATUS-1 (94 aa).

Over 1 to 15 (MSSCPAIVNMKDDDG) the chain is Cytoplasmic. Residues 16-36 (IGAMGAAVAFAAMGVFGIYFL) form a helical; Signal-anchor for type II membrane protein membrane-spanning segment. Residues 37–94 (WPVVGPTSAGMMMKAPGAAGWVICRAVFEANPQLYFTILRTAGAAAAAATFAACSIAS) lie on the Extracellular side of the membrane.

Possible proteolysis of the C-terminal region from the predicted transmembrane domain to permit secretion and transport of the mature protein to the cell walls of the nucellus, allowing the spreading from the egg cell apparatus to the micropylar opening of the ovule. As to expression, expressed only in the egg apparatus, consisting of the egg cell and two synergids. Not detected in the central cell, antipodals, and nucellar and integumental cells.

It is found in the membrane. Functionally, involved in short-range signaling required for pollen tube attraction by the female gametophyte. Required for female fertility. This Zea mays (Maize) protein is Protein EGG APPARATUS-1 (Ea1).